The following is a 419-amino-acid chain: C2 calcium-dependent domain-containing protein 4C (419 aa).

4 disordered regions span residues 1–96, 115–136, 151–225, and 247–300; these read MRKT…LASE, EDWT…MSLP, AESP…SPFG, and VSQL…HTVK. The span at 75–94 shows a compositional bias: low complexity; sequence LASPGPRRAPRSPRLPAKLA. Over residues 186 to 196 the composition is skewed to gly residues; that stretch reads KGNGGDGGSRE. A compositionally biased stretch (polar residues) spans 212–225; sequence ESDTGSSAESSPFG. Phosphoserine occurs at positions 259, 261, and 270. The 117-residue stretch at 303–419 folds into the C2 domain; sequence TRGSVRLLAE…LPLTSLLPFL (117 aa).

The protein belongs to the C2CD4 family.

The protein is C2 calcium-dependent domain-containing protein 4C (C2cd4c) of Mus musculus (Mouse).